We begin with the raw amino-acid sequence, 141 residues long: PNKALITGFWSKVKVDEVGAEALGRLLVVYPWTQRFFEHFGDLSTADAVLGNAKVKAHGKKVLDSFSZGVQHLDDLKGTFAQLSELHCDKLHVDPENFRLLGNVLVVVLARHFGKEFTPELQAEFQKVVAGVASALAHRYH.

A Globin domain is found at 1–141 (PNKALITGFW…VASALAHRYH (141 aa)). Residues His58 and His87 each contribute to the heme b site.

It belongs to the globin family. As to quaternary structure, heterotetramer of two alpha chains and two beta chains. Red blood cells.

Functionally, involved in oxygen transport from the lung to the various peripheral tissues. The chain is Hemoglobin subunit beta-C from Ammotragus lervia (Barbary sheep).